Reading from the N-terminus, the 75-residue chain is Conotoxin Leo-O3 (75 aa).

Positions 1-22 (MKLTCVVIVAVLFLTACQLATA) are cleaved as a signal peptide. A propeptide spanning residues 23–42 (DISGGMRKHRALRSTTKLSR) is cleaved from the precursor. 3 disulfides stabilise this stretch: C47–C60, C54–C63, and C59–C69. A Cysteine amide modification is found at C69. A propeptide spanning residues 70–75 (GSGLHV) is cleaved from the precursor.

Belongs to the conotoxin O1 superfamily. Expressed by the venom duct.

The protein resides in the secreted. The sequence is that of Conotoxin Leo-O3 from Conus leopardus (Leopard cone).